Consider the following 777-residue polypeptide: Glucocorticoid receptor (777 aa).

The span at Met1–Asn14 shows a compositional bias: basic and acidic residues. Positions Met1–Gln21 are disordered. The modulating stretch occupies residues Met1–Leu420. Residue Thr8 is modified to Phosphothreonine. Arg23 carries the post-translational modification Omega-N-methylarginine. Ser45, Ser113, Ser134, and Ser141 each carry phosphoserine. Positions Asn130–Lys182 are disordered. Low complexity predominate over residues Ser134 to Ala150. Basic and acidic residues predominate over residues Pro151–Val163. Over residues Ser164–Thr174 the composition is skewed to polar residues. A phosphoserine mark is found at Ser203, Ser211, and Ser226. Residue Lys258 forms a Glycyl lysine isopeptide (Lys-Gly) (interchain with G-Cter in SUMO2) linkage. The residue at position 267 (Ser267) is a Phosphoserine. Glycyl lysine isopeptide (Lys-Gly) (interchain with G-Cter in SUMO); alternate cross-links involve residues Lys277 and Lys293. Residues Lys277 and Lys293 each participate in a glycyl lysine isopeptide (Lys-Gly) (interchain with G-Cter in SUMO2); alternate cross-link. A compositionally biased stretch (low complexity) spans Ser394–Thr414. The segment at Ser394–Gly415 is disordered. At Ser404 the chain carries Phosphoserine. Lys419 is covalently cross-linked (Glycyl lysine isopeptide (Lys-Gly) (interchain with G-Cter in ubiquitin)). NR C4-type zinc fingers lie at residues Cys421–Cys441 and Cys457–Cys481. Positions Cys421–Met486 form a DNA-binding region, nuclear receptor. Residues Lys480, Lys492, Lys494, and Lys495 each carry the N6-acetyllysine modification. The segment at Gly485 to Lys777 is interaction with CLOCK. The segment at Asn487–Ala523 is hinge. One can recognise an NR LBD domain in the interval Thr524–Thr758. The interaction with CRY1 stretch occupies residues Leu532–Leu697. A Glycyl lysine isopeptide (Lys-Gly) (interchain with G-Cter in SUMO) cross-link involves residue Lys703.

The protein belongs to the nuclear hormone receptor family. NR3 subfamily. Heteromultimeric cytoplasmic complex with HSP90AA1, HSPA1A/HSPA1B, and FKBP5 or another immunophilin such as PPID, STIP1, or the immunophilin homolog PPP5C. Upon ligand binding FKBP5 dissociates from the complex and FKBP4 takes its place, thereby linking the complex to dynein and mediating transport to the nucleus, where the complex dissociates. Probably forms a complex composed of chaperones HSP90 and HSP70, co-chaperones CDC37, PPP5C, TSC1 and client protein TSC2, CDK4, AKT, RAF1 and NR3C1; this complex does not contain co-chaperones STIP1/HOP and PTGES3/p23. Directly interacts with UNC45A. Binds to DNA as a homodimer, and as heterodimer with NR3C2 or the retinoid X receptor. Binds STAT5A and STAT5B homodimers and heterodimers. Interacts with NRIP1, POU2F1, POU2F2 and TRIM28. Interacts with several coactivator complexes, including the SMARCA4 complex, CREBBP/EP300, TADA2L (Ada complex) and p160 coactivators such as NCOA2 and NCOA6. Interaction with BAG1 inhibits transactivation. Interacts with HEXIM1 and TGFB1I1. Interacts with NCOA1. Interacts with NCOA3, SMARCA4, SMARCC1, SMARCD1, and SMARCE1. Interacts with CLOCK, CRY1 and CRY2 in a ligand-dependent fashion. Interacts with CIART. Interacts with RWDD3. Interacts with UBE2I/UBC9 and this interaction is enhanced in the presence of RWDD3. Interacts with GRIP1. Interacts with NR4A3 (via nuclear receptor DNA-binding domain), represses transcription activity of NR4A3 on the POMC promoter Nur response element (NurRE). Directly interacts with PNRC2 to attract and form a complex with UPF1 and DCP1A; the interaction leads to rapid mRNA degradation. Interacts with GSK3B. Interacts with FNIP1 and FNIP2. Interacts (via C-terminus) with HNRNPU (via C-terminus). Interacts with MCM3AP. Interacts (via domain NR LBD) with HSP90AA1 and HSP90AB1. In the absence of hormonal ligand, interacts with TACC1. Interacts (via NR LBD domain) with ZNF764 (via KRAB domain); the interaction regulates transcription factor activity of NR3C1 by directing its actions toward certain biologic pathways. Post-translationally, acetylation by CLOCK reduces its binding to glucocorticoid response elements and its transcriptional activity. In terms of processing, increased proteasome-mediated degradation in response to glucocorticoids. Phosphorylated in the absence of hormone; becomes hyperphosphorylated in the presence of glucocorticoid. The Ser-203, Ser-226 and Ser-404-phosphorylated forms are mainly cytoplasmic, and the Ser-211-phosphorylated form is nuclear. Phosphorylation at Ser-211 increases transcriptional activity. Phosphorylation at Ser-203, Ser-226 and Ser-404 decreases signaling capacity. Phosphorylation at Ser-404 may protect from glucocorticoid-induced apoptosis. Phosphorylation at Ser-203 and Ser-211 is not required in regulation of chromosome segregation. May be dephosphorylated by PPP5C, attenuates NR3C1 action. Post-translationally, ubiquitinated by UBR5, leading to its degradation: UBR5 specifically recognizes and binds ligand-bound NR3C1 when it is not associated with coactivators (NCOAs). In presence of NCOAs, the UBR5-degron is not accessible, preventing its ubiquitination and degradation. In terms of processing, sumoylation at Lys-277 and Lys-293 negatively regulates its transcriptional activity. Sumoylation at Lys-703 positively regulates its transcriptional activity in the presence of RWDD3. Sumoylation at Lys-277 and Lys-293 is dispensable whereas sumoylation at Lys-703 is critical for the stimulatory effect of RWDD3 on its transcriptional activity. Heat shock increases sumoylation in a RWDD3-dependent manner. As to expression, within the infant and adult hippocampal formation, highest expression observed in the DG granule cell layer with moderate levels in the DG hilus, the CA2-CA4 pyramidal cell layer and the proximal part of the CA1 pyramidal cell layer. Moderate to high expression levels found in the presubiculum and in its' superficial layers. Weak but specific expression detected throughout the entire corticle mantle. In the amygdala, moderate levels were detected in the lateral, central and medial nuclei. Moderate expression levels were present in the PVNh alongside the third ventricle.

The protein resides in the cytoplasm. It is found in the nucleus. The protein localises to the mitochondrion. Its subcellular location is the cytoskeleton. It localises to the spindle. The protein resides in the microtubule organizing center. It is found in the centrosome. The protein localises to the chromosome. Its subcellular location is the nucleoplasm. Its function is as follows. Receptor for glucocorticoids (GC). Has a dual mode of action: as a transcription factor that binds to glucocorticoid response elements (GRE), both for nuclear and mitochondrial DNA, and as a modulator of other transcription factors. Affects inflammatory responses, cellular proliferation and differentiation in target tissues. Involved in chromatin remodeling. Plays a role in rapid mRNA degradation by binding to the 5' UTR of target mRNAs and interacting with PNRC2 in a ligand-dependent manner which recruits the RNA helicase UPF1 and the mRNA-decapping enzyme DCP1A, leading to RNA decay. Could act as a coactivator for STAT5-dependent transcription upon growth hormone (GH) stimulation and could reveal an essential role of hepatic GR in the control of body growth. Mediates glucocorticoid-induced apoptosis. Promotes accurate chromosome segregation during mitosis. May act as a tumor suppressor. May play a negative role in adipogenesis through the regulation of lipolytic and antilipogenic gene expression. The chain is Glucocorticoid receptor (NR3C1) from Callithrix jacchus (White-tufted-ear marmoset).